A 123-amino-acid polypeptide reads, in one-letter code: UPF0482 protein YE2026 (123 aa).

The first 31 residues, 1 to 31 (MKITSLPRLMRVFLPVAVLALPLAWQTAALA), serve as a signal peptide directing secretion. The tract at residues 47–66 (GNNDPMSKEQARQSQQQWDD) is disordered.

The protein belongs to the UPF0482 family.

This is UPF0482 protein YE2026 from Yersinia enterocolitica serotype O:8 / biotype 1B (strain NCTC 13174 / 8081).